Reading from the N-terminus, the 628-residue chain is MDFKYDVIVIGAGHAGCEAAAAAANLGSKTCLITMDMNKIGQMSCNPAVGGIAKGQIVREIDALGGQMGLVTDETAIQFRILNRSKGPAMWSPRAQCDRAKFIWSWREKLENTPNLHIWQDTVCELLVENGEVVGLVTLWGVTFKAKCIVLTAGTFLNGLMHVGRHQLPGGRMAEPASYQLTESIARHGIAYGRMKTGTPVRIDARSIHFDLMDTQDGECDFHKFSFMNTSTRHLKQLQCWTCYTNEEVHRILREGLPDSPLFNGQIQSIGPRYCPSIETKIVTFPDKEQHQLFLEPEGETTQELYLNGFSSSLPMDIQIAALKKVPAFKDIVIYRPGYAIEYDYFDPTQLKHSLESKIIKNLFFAGQVNGTTGYEEAGGQGLIAGINAHINCHGGEAFTLARDEAYIGVLIDDLVTKGVDEPYRMFTSRAEYRILLRMDDADMRLTERAYHLGLAREDRYQLMKTKKEALEQIVNFAKNYSMKPALINDALEKLGTTPLRQGCKLIEILNRPQITIENIAEHVPAFQRELEKATAADSDRKEEILEAAEILIKYQGYIDRERMIAEKLARLESIKIKGKFDYASIQSLSTEARQKLVKIDPETIAQASRIPGVSPSDINVLLVLSGR.

FAD contacts are provided by residues 11–16, V123, and S178; that span reads GAGHAG. 271-285 contacts NAD(+); sequence GPRYCPSIETKIVTF. An FAD-binding site is contributed by Q368.

The protein belongs to the MnmG family. In terms of assembly, homodimer. Heterotetramer of two MnmE and two MnmG subunits. The cofactor is FAD.

Its subcellular location is the cytoplasm. Functionally, NAD-binding protein involved in the addition of a carboxymethylaminomethyl (cmnm) group at the wobble position (U34) of certain tRNAs, forming tRNA-cmnm(5)s(2)U34. The protein is tRNA uridine 5-carboxymethylaminomethyl modification enzyme MnmG of Bacteroides thetaiotaomicron (strain ATCC 29148 / DSM 2079 / JCM 5827 / CCUG 10774 / NCTC 10582 / VPI-5482 / E50).